A 162-amino-acid polypeptide reads, in one-letter code: Deoxyuridine 5'-triphosphate nucleotidohydrolase (162 aa).

It belongs to the dUTPase family. As to quaternary structure, homotrimer. The cofactor is Mg(2+).

It localises to the host cytoplasm. Its subcellular location is the virion. It carries out the reaction dUTP + H2O = dUMP + diphosphate + H(+). The viral dUTPase may play a role in lowering the dUTP concentration in natural infections to minimize misincorporation of deoxyuridine into the viral DNA and ensure the fidelity of genome replication. The protein is Deoxyuridine 5'-triphosphate nucleotidohydrolase of Ornithodoros (relapsing fever ticks).